The primary structure comprises 457 residues: UDP-N-acetylmuramate--L-alanine ligase (457 aa).

Residue 117–123 (GTHGKTT) participates in ATP binding.

It belongs to the MurCDEF family.

The protein resides in the cytoplasm. The enzyme catalyses UDP-N-acetyl-alpha-D-muramate + L-alanine + ATP = UDP-N-acetyl-alpha-D-muramoyl-L-alanine + ADP + phosphate + H(+). It participates in cell wall biogenesis; peptidoglycan biosynthesis. Cell wall formation. The protein is UDP-N-acetylmuramate--L-alanine ligase of Clostridium kluyveri (strain NBRC 12016).